A 1188-amino-acid polypeptide reads, in one-letter code: Zinc finger SWIM domain-containing protein 5 (1188 aa).

Over residues 1 to 10 the composition is skewed to basic and acidic residues; the sequence is MAEGGEREEL. Disordered regions lie at residues 1–46 and 123–171; these read MAEG…GAGG and AGAA…TGTA. Low complexity-rich tracts occupy residues 126–136 and 146–155; these read AAGAAGASPVE and AAPAGSAPGA. Positions 156 to 171 are enriched in gly residues; the sequence is AGAGSSPGLGAGTGTA. The SWIM-type zinc finger occupies 222-259; the sequence is YKVAISFDRCKITSVSCGCGNKDIFYCAHVVALSLYRI.

This chain is Zinc finger SWIM domain-containing protein 5 (Zswim5), found in Mus musculus (Mouse).